The primary structure comprises 336 residues: Holliday junction branch migration complex subunit RuvB (336 aa).

The tract at residues 1-181 (MDRIVEIEKV…FGMDFRLQFY (181 aa)) is large ATPase domain (RuvB-L). Residues L20, R21, G62, K65, T66, T67, 128–130 (EDF), R171, Y181, and R218 contribute to the ATP site. T66 contributes to the Mg(2+) binding site. The interval 182-252 (TSSELSRIVQ…RAKEGLNALG (71 aa)) is small ATPAse domain (RuvB-S). The head domain (RuvB-H) stretch occupies residues 255–336 (SLGFDEMDIR…KIDIEKGLFE (82 aa)). R309 and R314 together coordinate DNA.

The protein belongs to the RuvB family. Homohexamer. Forms an RuvA(8)-RuvB(12)-Holliday junction (HJ) complex. HJ DNA is sandwiched between 2 RuvA tetramers; dsDNA enters through RuvA and exits via RuvB. An RuvB hexamer assembles on each DNA strand where it exits the tetramer. Each RuvB hexamer is contacted by two RuvA subunits (via domain III) on 2 adjacent RuvB subunits; this complex drives branch migration. In the full resolvosome a probable DNA-RuvA(4)-RuvB(12)-RuvC(2) complex forms which resolves the HJ.

The protein resides in the cytoplasm. The enzyme catalyses ATP + H2O = ADP + phosphate + H(+). The RuvA-RuvB-RuvC complex processes Holliday junction (HJ) DNA during genetic recombination and DNA repair, while the RuvA-RuvB complex plays an important role in the rescue of blocked DNA replication forks via replication fork reversal (RFR). RuvA specifically binds to HJ cruciform DNA, conferring on it an open structure. The RuvB hexamer acts as an ATP-dependent pump, pulling dsDNA into and through the RuvAB complex. RuvB forms 2 homohexamers on either side of HJ DNA bound by 1 or 2 RuvA tetramers; 4 subunits per hexamer contact DNA at a time. Coordinated motions by a converter formed by DNA-disengaged RuvB subunits stimulates ATP hydrolysis and nucleotide exchange. Immobilization of the converter enables RuvB to convert the ATP-contained energy into a lever motion, pulling 2 nucleotides of DNA out of the RuvA tetramer per ATP hydrolyzed, thus driving DNA branch migration. The RuvB motors rotate together with the DNA substrate, which together with the progressing nucleotide cycle form the mechanistic basis for DNA recombination by continuous HJ branch migration. Branch migration allows RuvC to scan DNA until it finds its consensus sequence, where it cleaves and resolves cruciform DNA. The chain is Holliday junction branch migration complex subunit RuvB from Campylobacter concisus (strain 13826).